Here is a 132-residue protein sequence, read N- to C-terminus: tRNA (cytidine(56)-2'-O)-methyltransferase (132 aa).

Residues leucine 35, 65–69 (GSEKV), and 83–90 (IGNQPHSE) each bind S-adenosyl-L-methionine.

It belongs to the aTrm56 family. Homodimer.

Its subcellular location is the cytoplasm. The enzyme catalyses cytidine(56) in tRNA + S-adenosyl-L-methionine = 2'-O-methylcytidine(56) in tRNA + S-adenosyl-L-homocysteine + H(+). Functionally, specifically catalyzes the AdoMet-dependent 2'-O-ribose methylation of cytidine at position 56 in tRNAs. This is tRNA (cytidine(56)-2'-O)-methyltransferase from Sulfolobus acidocaldarius (strain ATCC 33909 / DSM 639 / JCM 8929 / NBRC 15157 / NCIMB 11770).